The chain runs to 479 residues: Glycogen synthase (479 aa).

An ADP-alpha-D-glucose-binding site is contributed by lysine 15.

Belongs to the glycosyltransferase 1 family. Bacterial/plant glycogen synthase subfamily.

It catalyses the reaction [(1-&gt;4)-alpha-D-glucosyl](n) + ADP-alpha-D-glucose = [(1-&gt;4)-alpha-D-glucosyl](n+1) + ADP + H(+). The protein operates within glycan biosynthesis; glycogen biosynthesis. Its function is as follows. Synthesizes alpha-1,4-glucan chains using ADP-glucose. This chain is Glycogen synthase, found in Pectobacterium atrosepticum (strain SCRI 1043 / ATCC BAA-672) (Erwinia carotovora subsp. atroseptica).